The following is a 207-amino-acid chain: Thiamine-phosphate synthase (207 aa).

Residues 35 to 39 (QYRDK) and N67 contribute to the 4-amino-2-methyl-5-(diphosphooxymethyl)pyrimidine site. D68 and D86 together coordinate Mg(2+). T105 lines the 4-amino-2-methyl-5-(diphosphooxymethyl)pyrimidine pocket. A 2-[(2R,5Z)-2-carboxy-4-methylthiazol-5(2H)-ylidene]ethyl phosphate-binding site is contributed by 132 to 134 (SVT). K135 is a 4-amino-2-methyl-5-(diphosphooxymethyl)pyrimidine binding site. Residue G162 participates in 2-[(2R,5Z)-2-carboxy-4-methylthiazol-5(2H)-ylidene]ethyl phosphate binding.

This sequence belongs to the thiamine-phosphate synthase family. Requires Mg(2+) as cofactor.

The enzyme catalyses 2-[(2R,5Z)-2-carboxy-4-methylthiazol-5(2H)-ylidene]ethyl phosphate + 4-amino-2-methyl-5-(diphosphooxymethyl)pyrimidine + 2 H(+) = thiamine phosphate + CO2 + diphosphate. The catalysed reaction is 2-(2-carboxy-4-methylthiazol-5-yl)ethyl phosphate + 4-amino-2-methyl-5-(diphosphooxymethyl)pyrimidine + 2 H(+) = thiamine phosphate + CO2 + diphosphate. It catalyses the reaction 4-methyl-5-(2-phosphooxyethyl)-thiazole + 4-amino-2-methyl-5-(diphosphooxymethyl)pyrimidine + H(+) = thiamine phosphate + diphosphate. Its pathway is cofactor biosynthesis; thiamine diphosphate biosynthesis; thiamine phosphate from 4-amino-2-methyl-5-diphosphomethylpyrimidine and 4-methyl-5-(2-phosphoethyl)-thiazole: step 1/1. Functionally, condenses 4-methyl-5-(beta-hydroxyethyl)thiazole monophosphate (THZ-P) and 2-methyl-4-amino-5-hydroxymethyl pyrimidine pyrophosphate (HMP-PP) to form thiamine monophosphate (TMP). The polypeptide is Thiamine-phosphate synthase (Pseudomonas putida (strain W619)).